Reading from the N-terminus, the 116-residue chain is Large ribosomal subunit protein bL20 (116 aa).

This sequence belongs to the bacterial ribosomal protein bL20 family.

Its function is as follows. Binds directly to 23S ribosomal RNA and is necessary for the in vitro assembly process of the 50S ribosomal subunit. It is not involved in the protein synthesizing functions of that subunit. The polypeptide is Large ribosomal subunit protein bL20 (Helicobacter pylori (strain HPAG1)).